We begin with the raw amino-acid sequence, 185 residues long: Threonylcarbamoyl-AMP synthase (185 aa).

The 182-residue stretch at 4 to 185 (SFRVQQAARE…LATGEVVRPG (182 aa)) folds into the YrdC-like domain.

Belongs to the SUA5 family. TsaC subfamily.

It localises to the cytoplasm. It carries out the reaction L-threonine + hydrogencarbonate + ATP = L-threonylcarbamoyladenylate + diphosphate + H2O. Required for the formation of a threonylcarbamoyl group on adenosine at position 37 (t(6)A37) in tRNAs that read codons beginning with adenine. Catalyzes the conversion of L-threonine, HCO(3)(-)/CO(2) and ATP to give threonylcarbamoyl-AMP (TC-AMP) as the acyladenylate intermediate, with the release of diphosphate. In Pseudomonas putida (strain GB-1), this protein is Threonylcarbamoyl-AMP synthase.